The sequence spans 477 residues: Tripartite motif-containing protein 72 (477 aa).

Positions 14, 17, 29, 31, 34, 37, 53, 56, 86, 89, 97, 100, 105, 108, 114, and 117 each coordinate Zn(2+). The segment at 14–57 (CPLCLQLFDAPVTAECGHSFCRACLIRVAGEPADDGTVACPCCQ) adopts an RING-type zinc-finger fold. The B box-type zinc-finger motif lies at 81–122 (VPQGHCEEHLDPLSIYCEQDRTLVCGVCASLGSHRGHRLLPA). Positions 135–232 (QQKAQLQEAC…EKVLEEVADK (98 aa)) form a coiled coil. Position 144 is an S-nitrosocysteine (Cys144). Position 255 is a phosphoserine (Ser255). A B30.2/SPRY domain is found at 271-475 (DFKFQVWKKM…PLLLVGPDSE (205 aa)).

It belongs to the TRIM/RBCC family. As to quaternary structure, homodimer. Homooligomer; disulfide-linked. Oligomerizes on the phospholipid membrane. Interacts with DYSF and CAV3. Post-translationally, disulfide bond formation at Cys-242 occurs in case of membrane damage that cause the entry of the oxidized milieu of the extracellular space, resulting in homooligomerization. S-nitrosylation at Cys-144 stabilizes TRIM72 and protects against oxidation-induced protein degradation and cell death.

The protein resides in the cell membrane. The protein localises to the sarcolemma. It localises to the cytoplasmic vesicle membrane. It carries out the reaction S-ubiquitinyl-[E2 ubiquitin-conjugating enzyme]-L-cysteine + [acceptor protein]-L-lysine = [E2 ubiquitin-conjugating enzyme]-L-cysteine + N(6)-ubiquitinyl-[acceptor protein]-L-lysine.. It functions in the pathway protein modification; protein ubiquitination. Specifically binds phosphatidylserine. The binding to phospholipids enhances ubiquitination activity. Its function is as follows. Muscle-specific E3 ubiquitin-protein ligase that plays a central role in cell membrane repair by nucleating the assembly of the repair machinery at injury sites. Its ubiquitination activity is mediated by E2 ubiquitin-conjugating enzymes UBE2D1, UBE2D2 and UBE2D3. Acts as a sensor of oxidation: upon membrane damage, entry of extracellular oxidative environment results in disulfide bond formation and homooligomerization at the injury site. This oligomerization acts as a nucleation site for recruitment of TRIM72-containing vesicles to the injury site, leading to membrane patch formation. Probably acts upstream of the Ca(2+)-dependent membrane resealing process. Required for transport of DYSF to sites of cell injury during repair patch formation. Regulates membrane budding and exocytosis. May be involved in the regulation of the mobility of KCNB1-containing endocytic vesicles. The polypeptide is Tripartite motif-containing protein 72 (Rattus norvegicus (Rat)).